The following is a 204-amino-acid chain: MATTTQPAHAEAPQQGGLLRAALVIFVGLSLVTGVLYPVVVTGIGKAAFPAQAGGSIIERGGKPVGSALIGQNFSEPQYFWGRLSATSPNPYNGAASSGSNLGPSNPALTDAAKARIAALKEADPANTAPIPVDLVTASASGLDPHISPAAAAYQVERVARARHLPVERVKTLVAEHTTAPILGVFGEPVVNVLELNLGLGDLK.

Residues 21–41 traverse the membrane as a helical segment; that stretch reads AALVIFVGLSLVTGVLYPVVV.

This sequence belongs to the KdpC family. The system is composed of three essential subunits: KdpA, KdpB and KdpC.

It is found in the cell inner membrane. Part of the high-affinity ATP-driven potassium transport (or Kdp) system, which catalyzes the hydrolysis of ATP coupled with the electrogenic transport of potassium into the cytoplasm. This subunit acts as a catalytic chaperone that increases the ATP-binding affinity of the ATP-hydrolyzing subunit KdpB by the formation of a transient KdpB/KdpC/ATP ternary complex. This is Potassium-transporting ATPase KdpC subunit from Ralstonia nicotianae (strain ATCC BAA-1114 / GMI1000) (Ralstonia solanacearum).